A 67-amino-acid chain; its full sequence is UPF0181 protein KPK_1966 (67 aa).

A disordered region spans residues 48–67 (EQIVARFEDEDEDQDEDEDD). Positions 55–67 (EDEDEDQDEDEDD) are enriched in acidic residues.

This sequence belongs to the UPF0181 family.

This chain is UPF0181 protein KPK_1966, found in Klebsiella pneumoniae (strain 342).